The sequence spans 508 residues: Acyl-CoA-binding domain-containing protein 5 (508 aa).

An ACB domain is found at 44–133 (YETRFEAAVK…MKKIIETMPM (90 aa)). An acyl-CoA-binding positions include 55–64 (IQSLPKNGSF), 75–79 (YSFYK), K101, and Y120. The segment at 175 to 215 (AKAVNGKAESSDSGAESEEEEAQEELKGAEQSGSDDKKTLK) is disordered. Residues 181 to 214 (KAESSDSGAESEEEEAQEELKGAEQSGSDDKKTL) adopt a coiled-coil conformation. 6 positions are modified to phosphoserine: S184, S185, S187, S191, S206, and S233. Residues 198–215 (EELKGAEQSGSDDKKTLK) show a composition bias toward basic and acidic residues. The span at 240–260 (SDIHTDSSRSTRSSEDEKPGD) shows a compositional bias: basic and acidic residues. The tract at residues 240–300 (SDIHTDSSRS…LTSDSDSEVY (61 aa)) is disordered. S303 is subject to Phosphoserine. Disordered regions lie at residues 318–340 (PTQHLESSGFCEDAQQSPGNGSI) and 353–419 (EVKH…RGSR). Positions 353-376 (EVKHGGEDGRSSSGAPHRETRGGE) are enriched in basic and acidic residues. Position 405 is a phosphoserine (S405). A compositionally biased stretch (basic and acidic residues) spans 408–418 (DGERWGSDRGS). A coiled-coil region spans residues 428-453 (LVLIRLQEDMQNVLQRLHKLETLTAS). The residue at position 446 (K446) is an N6-acetyllysine. A helical membrane pass occupies residues 480 to 500 (GALAFAIIWPFIAQWLAHLYY).

It belongs to the ATG37 family.

The protein resides in the peroxisome membrane. Functionally, acyl-CoA binding protein which acts as the peroxisome receptor for pexophagy but is dispensable for aggrephagy and nonselective autophagy. Binds medium- and long-chain acyl-CoA esters. The polypeptide is Acyl-CoA-binding domain-containing protein 5 (Acbd5) (Mus musculus (Mouse)).